The following is a 249-amino-acid chain: MIRILVSNDDGVNAPGIRALTEALAEIATVMTVAPDRNCSGASNSLTLTNPLRINRLDNGYISVHGTPTDCVHLAIRELCDGEPDMVVSGINAGANMGDDTLYSGTVAAAMEGRFLGFPAVAISLNGKALKHYHTAAVYARRIVQGLLAHPIASDQILNINVPDLPLDEIKGIRVTRLGARHKAEGIVRTQDPAGKEIFWLGPPGVEQDASEGTDFHAVAHGYVSITPLTVDLTAHRQLSVLQDWVDKI.

A divalent metal cation is bound by residues Asp9, Asp10, Ser40, and Asn92.

The protein belongs to the SurE nucleotidase family. Requires a divalent metal cation as cofactor.

The protein localises to the cytoplasm. It catalyses the reaction a ribonucleoside 5'-phosphate + H2O = a ribonucleoside + phosphate. Nucleotidase that shows phosphatase activity on nucleoside 5'-monophosphates. The chain is 5'-nucleotidase SurE from Shewanella sp. (strain ANA-3).